Consider the following 119-residue polypeptide: Large ribosomal subunit protein uL18 (119 aa).

The protein belongs to the universal ribosomal protein uL18 family. As to quaternary structure, part of the 50S ribosomal subunit; part of the 5S rRNA/L5/L18/L25 subcomplex. Contacts the 5S and 23S rRNAs.

This is one of the proteins that bind and probably mediate the attachment of the 5S RNA into the large ribosomal subunit, where it forms part of the central protuberance. The polypeptide is Large ribosomal subunit protein uL18 (Lactobacillus delbrueckii subsp. bulgaricus (strain ATCC 11842 / DSM 20081 / BCRC 10696 / JCM 1002 / NBRC 13953 / NCIMB 11778 / NCTC 12712 / WDCM 00102 / Lb 14)).